A 236-amino-acid polypeptide reads, in one-letter code: Lipoprotein B (236 aa).

Residues 1–27 (MNKKYFKKYSSILIFSMSILAPMTLAS) form the signal peptide. The N-palmitoyl cysteine moiety is linked to residue cysteine 28. Cysteine 28 is lipidated: S-diacylglycerol cysteine. Disordered regions lie at residues 35–112 (EKDK…KSNV) and 134–236 (SEKQ…GDAF). The span at 43–60 (STNLSEPNKSNTSKTNTF) shows a compositional bias: polar residues. A compositionally biased stretch (basic and acidic residues) spans 61–74 (QDKKDSTNKIDSQE). Composition is skewed to polar residues over residues 75-112 (SSKT…KSNV) and 143-157 (NASS…NTLK). Positions 158–175 (NQDKTKQENDQFKQESKD) are enriched in basic and acidic residues. A compositionally biased stretch (polar residues) spans 193–212 (VISSQSTTRLEMPKNDQSNS). Basic and acidic residues predominate over residues 215–228 (EDNKKSPESPKWWE).

Belongs to the M.pulmonis LipAB lipoprotein family.

It is found in the cell membrane. This is Lipoprotein B (lipB) from Mycoplasmopsis pulmonis (strain UAB CTIP) (Mycoplasma pulmonis).